Here is a 794-residue protein sequence, read N- to C-terminus: DNA ligase (794 aa).

Residues 35–39, 84–85, and E126 contribute to the NAD(+) site; these read DAEYD and SL. Residue K128 is the N6-AMP-lysine intermediate of the active site. Residues R149, E186, K302, and K326 each contribute to the NAD(+) site. Zn(2+)-binding residues include C420, C423, C450, and C456. Residues 711–794 enclose the BRCT domain; that stretch reads VEGLPLAGQT…KLLDEYGVAH (84 aa).

Belongs to the NAD-dependent DNA ligase family. LigA subfamily. The cofactor is Mg(2+). It depends on Mn(2+) as a cofactor.

It catalyses the reaction NAD(+) + (deoxyribonucleotide)n-3'-hydroxyl + 5'-phospho-(deoxyribonucleotide)m = (deoxyribonucleotide)n+m + AMP + beta-nicotinamide D-nucleotide.. Its function is as follows. DNA ligase that catalyzes the formation of phosphodiester linkages between 5'-phosphoryl and 3'-hydroxyl groups in double-stranded DNA using NAD as a coenzyme and as the energy source for the reaction. It is essential for DNA replication and repair of damaged DNA. The polypeptide is DNA ligase (Pseudomonas paraeruginosa (strain DSM 24068 / PA7) (Pseudomonas aeruginosa (strain PA7))).